Consider the following 514-residue polypeptide: Cholesterol side-chain cleavage enzyme, mitochondrial (514 aa).

Residues 1-39 (MMVSWSVCRSSLALPACGLPSARHNSSMPVVRQALSPDN) constitute a mitochondrion transit peptide. Heme is bound at residue C458.

It belongs to the cytochrome P450 family. Heme is required as a cofactor. As to expression, in the ovary, not found in early vitellogenic follicles, barely detected in postvitellogenic follicles and abundant in post-ovulatory follicles.

The protein resides in the mitochondrion inner membrane. It catalyses the reaction 6 reduced [adrenodoxin] + cholesterol + 3 O2 + 6 H(+) = 4-methylpentanal + pregnenolone + 6 oxidized [adrenodoxin] + 4 H2O. Its pathway is lipid metabolism; C21-steroid hormone metabolism. Catalyzes the side-chain cleavage reaction of cholesterol to pregnenolone, the precursor of most steroid hormones. This chain is Cholesterol side-chain cleavage enzyme, mitochondrial (cyp11a1), found in Oncorhynchus mykiss (Rainbow trout).